The following is a 617-amino-acid chain: Dihydroxy-acid dehydratase (617 aa).

Residue D82 participates in Mg(2+) binding. C123 is a [2Fe-2S] cluster binding site. Residues D124 and K125 each contribute to the Mg(2+) site. K125 is modified (N6-carboxylysine). Residue C197 participates in [2Fe-2S] cluster binding. E497 provides a ligand contact to Mg(2+). The active-site Proton acceptor is the S523.

It belongs to the IlvD/Edd family. In terms of assembly, homodimer. It depends on [2Fe-2S] cluster as a cofactor. The cofactor is Mg(2+).

The catalysed reaction is (2R)-2,3-dihydroxy-3-methylbutanoate = 3-methyl-2-oxobutanoate + H2O. The enzyme catalyses (2R,3R)-2,3-dihydroxy-3-methylpentanoate = (S)-3-methyl-2-oxopentanoate + H2O. The protein operates within amino-acid biosynthesis; L-isoleucine biosynthesis; L-isoleucine from 2-oxobutanoate: step 3/4. It functions in the pathway amino-acid biosynthesis; L-valine biosynthesis; L-valine from pyruvate: step 3/4. Its function is as follows. Functions in the biosynthesis of branched-chain amino acids. Catalyzes the dehydration of (2R,3R)-2,3-dihydroxy-3-methylpentanoate (2,3-dihydroxy-3-methylvalerate) into 2-oxo-3-methylpentanoate (2-oxo-3-methylvalerate) and of (2R)-2,3-dihydroxy-3-methylbutanoate (2,3-dihydroxyisovalerate) into 2-oxo-3-methylbutanoate (2-oxoisovalerate), the penultimate precursor to L-isoleucine and L-valine, respectively. The chain is Dihydroxy-acid dehydratase from Streptomyces coelicolor (strain ATCC BAA-471 / A3(2) / M145).